We begin with the raw amino-acid sequence, 300 residues long: Cell shape-determining protein MreC (300 aa).

At Met1–Arg17 the chain is on the cytoplasmic side. Residues Ile18 to Ser38 traverse the membrane as a helical segment. The Periplasmic segment spans residues Pro39–Gly300. The stretch at Gln74–Arg117 forms a coiled coil. The segment at Ser277–Gly300 is disordered.

Belongs to the MreC family.

Its subcellular location is the cell inner membrane. Its function is as follows. Involved in formation and maintenance of cell shape. This is Cell shape-determining protein MreC from Cereibacter sphaeroides (Rhodobacter sphaeroides).